A 439-amino-acid polypeptide reads, in one-letter code: Serine--tRNA ligase (439 aa).

Residue 247–249 coordinates L-serine; the sequence is TSE. 278–280 contacts ATP; sequence RSE. L-serine is bound at residue E301. 365 to 368 contributes to the ATP binding site; it reads EISS. An L-serine-binding site is contributed by S400.

This sequence belongs to the class-II aminoacyl-tRNA synthetase family. Type-1 seryl-tRNA synthetase subfamily. As to quaternary structure, homodimer. The tRNA molecule binds across the dimer.

It is found in the cytoplasm. The enzyme catalyses tRNA(Ser) + L-serine + ATP = L-seryl-tRNA(Ser) + AMP + diphosphate + H(+). It carries out the reaction tRNA(Sec) + L-serine + ATP = L-seryl-tRNA(Sec) + AMP + diphosphate + H(+). Its pathway is aminoacyl-tRNA biosynthesis; selenocysteinyl-tRNA(Sec) biosynthesis; L-seryl-tRNA(Sec) from L-serine and tRNA(Sec): step 1/1. In terms of biological role, catalyzes the attachment of serine to tRNA(Ser). Is also able to aminoacylate tRNA(Sec) with serine, to form the misacylated tRNA L-seryl-tRNA(Sec), which will be further converted into selenocysteinyl-tRNA(Sec). This is Serine--tRNA ligase from Paracidovorax citrulli (strain AAC00-1) (Acidovorax citrulli).